An 87-amino-acid polypeptide reads, in one-letter code: Phosphoribosyl-ATP pyrophosphatase (87 aa).

It belongs to the PRA-PH family.

The protein resides in the cytoplasm. The enzyme catalyses 1-(5-phospho-beta-D-ribosyl)-ATP + H2O = 1-(5-phospho-beta-D-ribosyl)-5'-AMP + diphosphate + H(+). Its pathway is amino-acid biosynthesis; L-histidine biosynthesis; L-histidine from 5-phospho-alpha-D-ribose 1-diphosphate: step 2/9. The polypeptide is Phosphoribosyl-ATP pyrophosphatase (Bifidobacterium longum (strain DJO10A)).